Here is a 120-residue protein sequence, read N- to C-terminus: Large ribosomal subunit protein uL18 (120 aa).

Belongs to the universal ribosomal protein uL18 family. As to quaternary structure, part of the 50S ribosomal subunit; part of the 5S rRNA/L5/L18/L25 subcomplex. Contacts the 5S and 23S rRNAs.

Its function is as follows. This is one of the proteins that bind and probably mediate the attachment of the 5S RNA into the large ribosomal subunit, where it forms part of the central protuberance. The chain is Large ribosomal subunit protein uL18 from Brucella suis biovar 1 (strain 1330).